The following is a 173-amino-acid chain: RNA polymerase sigma factor TcsR (173 aa).

The sigma-70 factor domain-4 stretch occupies residues 122-169 (IKDLTQNEKNIIRKIYLDRLRESEISRELNISRQAVNKTHLRALEKLK). Residues 143–162 (ESEISRELNISRQAVNKTHL) constitute a DNA-binding region (H-T-H motif).

It belongs to the sigma-70 factor family.

In terms of biological role, sigma factors are initiation factors that promote the attachment of RNA polymerase to specific initiation sites and are then released. Transcriptional regulator specifically required to activate expression of the toxin gene locus, composed of tcsL, tcsH and tcdE/utxA. This chain is RNA polymerase sigma factor TcsR, found in Paraclostridium sordellii (Clostridium sordellii).